The primary structure comprises 755 residues: Xaa-Pro dipeptidyl-peptidase (755 aa).

Active-site charge relay system residues include serine 348, aspartate 468, and histidine 498.

The protein belongs to the peptidase S15 family. Homodimer.

Its subcellular location is the cytoplasm. The enzyme catalyses Hydrolyzes Xaa-Pro-|- bonds to release unblocked, N-terminal dipeptides from substrates including Ala-Pro-|-p-nitroanilide and (sequentially) Tyr-Pro-|-Phe-Pro-|-Gly-Pro-|-Ile.. In terms of biological role, removes N-terminal dipeptides sequentially from polypeptides having unsubstituted N-termini provided that the penultimate residue is proline. The chain is Xaa-Pro dipeptidyl-peptidase from Streptococcus thermophilus (strain ATCC BAA-250 / LMG 18311).